Here is a 68-residue protein sequence, read N- to C-terminus: Small ribosomal subunit protein bS21 (68 aa).

Positions 39–68 are disordered; it reads PPSVKRVRKKQESERRHRKERAMRRRMMEE. Over residues 54 to 68 the composition is skewed to basic residues; it reads RHRKERAMRRRMMEE.

It belongs to the bacterial ribosomal protein bS21 family.

The chain is Small ribosomal subunit protein bS21 from Orientia tsutsugamushi (strain Ikeda) (Rickettsia tsutsugamushi).